The primary structure comprises 121 residues: MGRVFMVDLEGNIYICKLCKTHLSTDQDIMSKSFQCKNGRAYLFNNVVNVSVGEKEDRMMITGLHNVVDIFCVGCGSNVGWKYEFAHEKSQKYKEGKSVLELYKISGPHDSNDLVSDGDDA.

The region spanning 12–109 (NIYICKLCKT…LELYKISGPH (98 aa)) is the Yippee domain. Zn(2+) contacts are provided by Cys-16, Cys-19, Cys-72, and Cys-75.

The protein belongs to the yippee family.

This is Protein yippee-like At3g55890 from Arabidopsis thaliana (Mouse-ear cress).